The chain runs to 678 residues: DNA ligase (678 aa).

Residues 47-51, 96-97, and E122 contribute to the NAD(+) site; these read DSDYD and SL. The N6-AMP-lysine intermediate role is filled by K124. NAD(+) contacts are provided by R145, E182, K300, and K324. Positions 418, 421, 436, and 442 each coordinate Zn(2+). The region spanning 602 to 678 is the BRCT domain; that stretch reads AHNESFTNKT…IFEEDLQNLL (77 aa).

Belongs to the NAD-dependent DNA ligase family. LigA subfamily. The cofactor is Mg(2+). Mn(2+) is required as a cofactor.

The catalysed reaction is NAD(+) + (deoxyribonucleotide)n-3'-hydroxyl + 5'-phospho-(deoxyribonucleotide)m = (deoxyribonucleotide)n+m + AMP + beta-nicotinamide D-nucleotide.. In terms of biological role, DNA ligase that catalyzes the formation of phosphodiester linkages between 5'-phosphoryl and 3'-hydroxyl groups in double-stranded DNA using NAD as a coenzyme and as the energy source for the reaction. It is essential for DNA replication and repair of damaged DNA. This chain is DNA ligase, found in Francisella philomiragia subsp. philomiragia (strain ATCC 25017 / CCUG 19701 / FSC 153 / O#319-036).